The chain runs to 304 residues: NADH-cytochrome b5 reductase 2 (304 aa).

Residues 9-29 traverse the membrane as a helical segment; that stretch reads MLVALAVIGVTVLLFLIKALG. The FAD-binding FR-type domain occupies 43-155; that stretch reads NAKYPLPLIE…RGPNGLLVYK (113 aa). FAD is bound by residues 135–150 and 174–209; these read DSLK…GPNG and VAKH…KCSL.

Belongs to the flavoprotein pyridine nucleotide cytochrome reductase family. Requires FAD as cofactor.

It is found in the membrane. It catalyses the reaction 2 Fe(III)-[cytochrome b5] + NADH = 2 Fe(II)-[cytochrome b5] + NAD(+) + H(+). Functionally, NADH-cytochrome b5 reductases are involved in desaturation and elongation of fatty acids, cholesterol biosynthesis and drug metabolism. The protein is NADH-cytochrome b5 reductase 2 (cyb5r2) of Xenopus tropicalis (Western clawed frog).